The following is a 132-amino-acid chain: Small ribosomal subunit protein uS8 (132 aa).

The protein belongs to the universal ribosomal protein uS8 family. As to quaternary structure, part of the 30S ribosomal subunit. Contacts proteins S5 and S12.

In terms of biological role, one of the primary rRNA binding proteins, it binds directly to 16S rRNA central domain where it helps coordinate assembly of the platform of the 30S subunit. The sequence is that of Small ribosomal subunit protein uS8 from Coprothermobacter proteolyticus (strain ATCC 35245 / DSM 5265 / OCM 4 / BT).